The chain runs to 267 residues: Hydroxyethylthiazole kinase (267 aa).

A substrate-binding site is contributed by Met-42. ATP-binding residues include Arg-118 and Ser-164. Residue Ala-191 coordinates substrate.

The protein belongs to the Thz kinase family. The cofactor is Mg(2+).

It catalyses the reaction 5-(2-hydroxyethyl)-4-methylthiazole + ATP = 4-methyl-5-(2-phosphooxyethyl)-thiazole + ADP + H(+). It functions in the pathway cofactor biosynthesis; thiamine diphosphate biosynthesis; 4-methyl-5-(2-phosphoethyl)-thiazole from 5-(2-hydroxyethyl)-4-methylthiazole: step 1/1. Catalyzes the phosphorylation of the hydroxyl group of 4-methyl-5-beta-hydroxyethylthiazole (THZ). The chain is Hydroxyethylthiazole kinase from Pasteurella multocida (strain Pm70).